The sequence spans 139 residues: Small ribosomal subunit protein uS12 (139 aa).

The residue at position 102 (Asp102) is a 3-methylthioaspartic acid. Positions 116-139 are disordered; sequence DTTGVAKRSQGRSKYGAKRPKKSK. A compositionally biased stretch (basic residues) spans 124–139; sequence SQGRSKYGAKRPKKSK.

Belongs to the universal ribosomal protein uS12 family. As to quaternary structure, part of the 30S ribosomal subunit. Contacts proteins S8 and S17. May interact with IF1 in the 30S initiation complex.

Functionally, with S4 and S5 plays an important role in translational accuracy. Interacts with and stabilizes bases of the 16S rRNA that are involved in tRNA selection in the A site and with the mRNA backbone. Located at the interface of the 30S and 50S subunits, it traverses the body of the 30S subunit contacting proteins on the other side and probably holding the rRNA structure together. The combined cluster of proteins S8, S12 and S17 appears to hold together the shoulder and platform of the 30S subunit. The protein is Small ribosomal subunit protein uS12 of Mesomycoplasma hyopneumoniae (strain 7448) (Mycoplasma hyopneumoniae).